A 258-amino-acid polypeptide reads, in one-letter code: Shikimate dehydrogenase (NADP(+)) (258 aa).

Residues 14-16 (SES) and Thr-61 each bind shikimate. Residue Lys-65 is the Proton acceptor of the active site. Shikimate contacts are provided by Asn-86 and Asp-101. NADP(+) contacts are provided by residues 125-129 (GSGGS) and Leu-211. Tyr-213 is a shikimate binding site. Gly-234 contacts NADP(+).

It belongs to the shikimate dehydrogenase family. As to quaternary structure, homodimer.

The catalysed reaction is shikimate + NADP(+) = 3-dehydroshikimate + NADPH + H(+). It participates in metabolic intermediate biosynthesis; chorismate biosynthesis; chorismate from D-erythrose 4-phosphate and phosphoenolpyruvate: step 4/7. Functionally, involved in the biosynthesis of the chorismate, which leads to the biosynthesis of aromatic amino acids. Catalyzes the reversible NADPH linked reduction of 3-dehydroshikimate (DHSA) to yield shikimate (SA). This is Shikimate dehydrogenase (NADP(+)) from Clostridium botulinum (strain 657 / Type Ba4).